We begin with the raw amino-acid sequence, 365 residues long: UDP-N-acetylglucosamine--N-acetylmuramyl-(pentapeptide) pyrophosphoryl-undecaprenol N-acetylglucosamine transferase (365 aa).

Residues 10 to 12 (TGG), Asn128, Arg170, Ser199, Ile250, and Gln295 each bind UDP-N-acetyl-alpha-D-glucosamine.

It belongs to the glycosyltransferase 28 family. MurG subfamily.

It is found in the cell inner membrane. The catalysed reaction is di-trans,octa-cis-undecaprenyl diphospho-N-acetyl-alpha-D-muramoyl-L-alanyl-D-glutamyl-meso-2,6-diaminopimeloyl-D-alanyl-D-alanine + UDP-N-acetyl-alpha-D-glucosamine = di-trans,octa-cis-undecaprenyl diphospho-[N-acetyl-alpha-D-glucosaminyl-(1-&gt;4)]-N-acetyl-alpha-D-muramoyl-L-alanyl-D-glutamyl-meso-2,6-diaminopimeloyl-D-alanyl-D-alanine + UDP + H(+). Its pathway is cell wall biogenesis; peptidoglycan biosynthesis. Its function is as follows. Cell wall formation. Catalyzes the transfer of a GlcNAc subunit on undecaprenyl-pyrophosphoryl-MurNAc-pentapeptide (lipid intermediate I) to form undecaprenyl-pyrophosphoryl-MurNAc-(pentapeptide)GlcNAc (lipid intermediate II). In Prosthecochloris aestuarii (strain DSM 271 / SK 413), this protein is UDP-N-acetylglucosamine--N-acetylmuramyl-(pentapeptide) pyrophosphoryl-undecaprenol N-acetylglucosamine transferase.